We begin with the raw amino-acid sequence, 220 residues long: uncharacterized protein (220 aa).

The disordered stretch occupies residues 194 to 220; sequence DQSQQQATKSNSKTKKLKGNHGEKTKI. Positions 195–204 are enriched in polar residues; sequence QSQQQATKSN.

This is an uncharacterized protein from Borreliella burgdorferi (strain ATCC 35210 / DSM 4680 / CIP 102532 / B31) (Borrelia burgdorferi).